Reading from the N-terminus, the 366-residue chain is Quinolinate synthase (366 aa).

The iminosuccinate site is built by His-44 and Ser-61. Residue Cys-108 coordinates [4Fe-4S] cluster. Iminosuccinate-binding positions include 139–141 and Ser-160; that span reads YVN. Cys-228 provides a ligand contact to [4Fe-4S] cluster. Iminosuccinate contacts are provided by residues 254 to 256 and Thr-271; that span reads HPE. [4Fe-4S] cluster is bound at residue Cys-318.

It belongs to the quinolinate synthase family. Type 3 subfamily. Requires [4Fe-4S] cluster as cofactor.

The protein localises to the cytoplasm. It carries out the reaction iminosuccinate + dihydroxyacetone phosphate = quinolinate + phosphate + 2 H2O + H(+). It participates in cofactor biosynthesis; NAD(+) biosynthesis; quinolinate from iminoaspartate: step 1/1. Its function is as follows. Catalyzes the condensation of iminoaspartate with dihydroxyacetone phosphate to form quinolinate. The sequence is that of Quinolinate synthase from Staphylococcus carnosus (strain TM300).